Consider the following 132-residue polypeptide: Histone H2B.1 (132 aa).

Positions 1–13 (MSAKASKAPASKA) are enriched in low complexity. Positions 1–39 (MSAKASKAPASKAPAEKKPAAKKTSSSTDPSKKRTKARK) are disordered. Lysine 7 carries the N6-acetyllysine; alternate modification. Lysine 7 participates in a covalent cross-link: Glycyl lysine isopeptide (Lys-Gly) (interchain with G-Cter in SUMO); alternate. Position 11 is a phosphoserine (serine 11). Lysine 12 is modified (N6-acetyllysine). N6-acetyllysine; alternate is present on lysine 17. Lysine 17 participates in a covalent cross-link: Glycyl lysine isopeptide (Lys-Gly) (interchain with G-Cter in SUMO); alternate. Residue lysine 18 forms a Glycyl lysine isopeptide (Lys-Gly) (interchain with G-Cter in SUMO) linkage. Lysine 125 is covalently cross-linked (Glycyl lysine isopeptide (Lys-Gly) (interchain with G-Cter in ubiquitin)).

The protein belongs to the histone H2B family. As to quaternary structure, the nucleosome is a histone octamer containing two molecules each of H2A, H2B, H3 and H4 assembled in one H3-H4 heterotetramer and two H2A-H2B heterodimers. The octamer wraps approximately 147 bp of DNA. In terms of processing, monoubiquitinated by the UBC2-BRE1 complex to form H2BK123ub1. H2BK123ub1 gives a specific tag for epigenetic transcriptional activation and is also prerequisite for H3K4me and H3K79me formation. H2BK123ub1 also modulates the formation of double-strand breaks during meiosis and is a prerequisite for DNA-damage checkpoint activation. Post-translationally, phosphorylated by STE20 to form H2BS10ph during progression through meiotic prophase. May be correlated with chromosome condensation. Acetylated by GCN5 to form H2BK11ac and H2BK16ac. H2BK16ac can also be formed by ESA1. Acetylation of N-terminal lysines and particularly formation of H2BK11acK16ac has a positive effect on transcription. In terms of processing, sumoylation to form H2BK6su and probably also H2BK16su or H2BK17su, occurs preferentially near the telomeres and represses gene transcription.

The protein localises to the nucleus. It is found in the chromosome. Its function is as follows. Core component of nucleosome. Nucleosomes wrap and compact DNA into chromatin, limiting DNA accessibility to the cellular machineries which require DNA as a template. Histones thereby play a central role in transcription regulation, DNA repair, DNA replication and chromosomal stability. DNA accessibility is regulated via a complex set of post-translational modifications of histones, also called histone code, and nucleosome remodeling. This Kluyveromyces lactis (strain ATCC 8585 / CBS 2359 / DSM 70799 / NBRC 1267 / NRRL Y-1140 / WM37) (Yeast) protein is Histone H2B.1 (HTB1).